The following is a 297-amino-acid chain: Ribosomal RNA small subunit methyltransferase A (297 aa).

N31, L33, G58, E79, D104, and N129 together coordinate S-adenosyl-L-methionine.

The protein belongs to the class I-like SAM-binding methyltransferase superfamily. rRNA adenine N(6)-methyltransferase family. RsmA subfamily.

The protein localises to the cytoplasm. The catalysed reaction is adenosine(1518)/adenosine(1519) in 16S rRNA + 4 S-adenosyl-L-methionine = N(6)-dimethyladenosine(1518)/N(6)-dimethyladenosine(1519) in 16S rRNA + 4 S-adenosyl-L-homocysteine + 4 H(+). Functionally, specifically dimethylates two adjacent adenosines (A1518 and A1519) in the loop of a conserved hairpin near the 3'-end of 16S rRNA in the 30S particle. May play a critical role in biogenesis of 30S subunits. This chain is Ribosomal RNA small subunit methyltransferase A, found in Pediococcus pentosaceus (strain ATCC 25745 / CCUG 21536 / LMG 10740 / 183-1w).